Consider the following 273-residue polypeptide: Large ribosomal subunit protein uL2 (273 aa).

The interval 228 to 273 (VDHPHGGGEGKTSGGRHPVTPWGFPTKGKKTRKNKRTSKFIVKKRK) is disordered. The segment covering 254-273 (KGKKTRKNKRTSKFIVKKRK) has biased composition (basic residues).

This sequence belongs to the universal ribosomal protein uL2 family. Part of the 50S ribosomal subunit. Forms a bridge to the 30S subunit in the 70S ribosome.

Its function is as follows. One of the primary rRNA binding proteins. Required for association of the 30S and 50S subunits to form the 70S ribosome, for tRNA binding and peptide bond formation. It has been suggested to have peptidyltransferase activity; this is somewhat controversial. Makes several contacts with the 16S rRNA in the 70S ribosome. This chain is Large ribosomal subunit protein uL2, found in Rickettsia massiliae (strain Mtu5).